Reading from the N-terminus, the 21-residue chain is uncharacterized protein (21 aa).

This is an uncharacterized protein from Escherichia coli (strain K12).